Here is a 128-residue protein sequence, read N- to C-terminus: UPF0102 protein KPN78578_35270 (128 aa).

The segment at 1–20 (MAQVPAGKNRSGQLSKQTGD) is disordered.

This sequence belongs to the UPF0102 family.

The protein is UPF0102 protein KPN78578_35270 of Klebsiella pneumoniae subsp. pneumoniae (strain ATCC 700721 / MGH 78578).